Reading from the N-terminus, the 295-residue chain is Sulfotransferase 1A1 (295 aa).

A 3'-phosphoadenylyl sulfate-binding site is contributed by 48–53 (KSGTTW). 106-108 (KTH) is a binding site for substrate. Histidine 108 functions as the Proton acceptor in the catalytic mechanism. 3'-phosphoadenylyl sulfate is bound by residues arginine 130, serine 138, tyrosine 193, 227-232 (TSFKEM), and 255-259 (FMRKG). Phosphoserine is present on serine 138.

It belongs to the sulfotransferase 1 family. Homodimer. In terms of tissue distribution, liver, lung, adrenal, brain, platelets and skin.

It localises to the cytoplasm. The catalysed reaction is a phenol + 3'-phosphoadenylyl sulfate = an aryl sulfate + adenosine 3',5'-bisphosphate + H(+). It catalyses the reaction 17beta-estradiol + 3'-phosphoadenylyl sulfate = 17beta-estradiol 3-sulfate + adenosine 3',5'-bisphosphate + H(+). It carries out the reaction 4-ethylphenol + 3'-phosphoadenylyl sulfate = 4-ethylphenyl sulfate + adenosine 3',5'-bisphosphate + H(+). The enzyme catalyses 4-nitrophenol + 3'-phosphoadenylyl sulfate = 4-nitrophenyl sulfate + adenosine 3',5'-bisphosphate. The catalysed reaction is dopamine + 3'-phosphoadenylyl sulfate = dopamine 3-O-sulfate + adenosine 3',5'-bisphosphate + H(+). It catalyses the reaction dopamine + 3'-phosphoadenylyl sulfate = dopamine 4-O-sulfate + adenosine 3',5'-bisphosphate + H(+). It carries out the reaction 3,3',5-triiodo-L-thyronine + 3'-phosphoadenylyl sulfate = 3,3',5-triiodo-L-thyronine sulfate + adenosine 3',5'-bisphosphate + H(+). The enzyme catalyses 3,3',5'-triiodo-L-thyronine + 3'-phosphoadenylyl sulfate = 3,3',5'-triiodo-L-thyronine sulfate + adenosine 3',5'-bisphosphate + H(+). The catalysed reaction is 3,3'-diiodo-L-thyronine + 3'-phosphoadenylyl sulfate = 3,3'-diiodo-L-thyronine sulfate + adenosine 3',5'-bisphosphate + H(+). It catalyses the reaction L-thyroxine + 3'-phosphoadenylyl sulfate = L-thyroxine sulfate + adenosine 3',5'-bisphosphate + H(+). In terms of biological role, sulfotransferase that utilizes 3'-phospho-5'-adenylyl sulfate (PAPS) as sulfonate donor to catalyze the sulfate conjugation of a wide variety of acceptor molecules bearing a hydroxyl or an amine group. Sulfonation increases the water solubility of most compounds, and therefore their renal excretion, but it can also result in bioactivation to form active metabolites. Displays broad substrate specificity for small phenolic compounds. Plays an important role in the sulfonation of endogenous molecules such as steroid hormones. Mediates the sulfate conjugation of a variety of xenobiotics, including the drugs acetaminophen and minoxidil. Mediates also the metabolic activation of carcinogenic N-hydroxyarylamines leading to highly reactive intermediates capable of forming DNA adducts, potentially resulting in mutagenesis. May play a role in gut microbiota-host metabolic interaction. O-sulfonates 4-ethylphenol (4-EP), a dietary tyrosine-derived metabolite produced by gut bacteria. The product 4-EPS crosses the blood-brain barrier and may negatively regulate oligodendrocyte maturation and myelination, affecting the functional connectivity of different brain regions associated with the limbic system. Catalyzes the sulfate conjugation of dopamine. Catalyzes the sulfation of T4 (L-thyroxine/3,5,3',5'-tetraiodothyronine), T3 (3,5,3'-triiodothyronine), rT3 (3,3',5'-triiodothyronine) and 3,3'-T2 (3,3'-diiodothyronine), with a substrate preference of 3,3'-T2 &gt; rT3 &gt; T3 &gt; T4. This Homo sapiens (Human) protein is Sulfotransferase 1A1 (SULT1A1).